Reading from the N-terminus, the 379-residue chain is MADENGSLREAGAGGKTRAQAVVTIPSSAYFLKQVEEEEEVEALKVEVAAASDTESDTSSDDLSCGKADIDPSLLERVDEEKCRSIRKQYRQLIYTVQQNRDDIVNTASDSLTEALEEANVLFDAVSRTREAALDSQFLVLASDLGKEKAKHLNSDMNFFNQVAFCDFLFIFVGLNWMEDDERDPLNNCDDNIALSFWETVQKEATSCISQAETFHFLFGSFKPESAARKPRRNHRRKVQKMEENGVMPTKLRKLDLSGNQEATEKEVERILGLLQTYFRKYPDTPVSYFEFVIDPNSFSRTVENIFYVSFIIRDGFARIRLDQDRLPILEPININLAGEGNDPSFHSRKQGVISLSLQDWKNIVAAFEISEAMITNSY.

The stretch at 32–58 (LKQVEEEEEVEALKVEVAAASDTESDT) forms a coiled coil.

The protein belongs to the NSE4 family. As to quaternary structure, component of the SMC5-SMC6 complex which consists at least of SMC5, SMC6, NSMCE2, NSMCE1, NSMCE4A or EID3 and NSMCE3. NSMCE1, NSMCE4A or EID3 and NSMCE3 probably form a subcomplex that bridges the head domains of the SMC5:SMC6 heterodimer. Homodimer, and heterodimer with EID2. Interacts with the C-terminal region of CREBBP.

Its subcellular location is the nucleus. The protein resides in the cytoplasm. It localises to the chromosome. It is found in the telomere. Functionally, tissue-specific component of the SMC5-SMC6 complex, a complex involved in repair of DNA double-strand breaks by homologous recombination. The complex may promote sister chromatid homologous recombination by recruiting the SMC1-SMC3 cohesin complex to double-strand breaks. The complex is required for telomere maintenance via recombination and mediates sumoylation of shelterin complex (telosome) components. In terms of biological role, acts as a repressor of nuclear receptor-dependent transcription possibly by interfering with CREBBP-dependent coactivation. May function as a coinhibitor of other CREBBP/EP300-dependent transcription factors. The polypeptide is EP300-interacting inhibitor of differentiation 3 (Bos taurus (Bovine)).